The sequence spans 315 residues: Diacylglycerol kinase (315 aa).

The 132-residue stretch at 1–132 folds into the DAGKc domain; that stretch reads MRKRARIIYN…VDIGKMNNRY (132 aa). Residues 10-14, T41, 67-73, and T94 each bind ATP; these read NPTSG and GDGTLNE. Residues K213, D216, and Y218 each contribute to the Mg(2+) site. E273 functions as the Proton acceptor in the catalytic mechanism.

Belongs to the diacylglycerol/lipid kinase family. As to quaternary structure, homodimer. The cofactor is Mg(2+).

The enzyme catalyses a 1,2-diacyl-sn-glycerol + ATP = a 1,2-diacyl-sn-glycero-3-phosphate + ADP + H(+). Functionally, catalyzes the phosphorylation of diacylglycerol (DAG) into phosphatidic acid. Is a key enzyme involved in the production of lipoteichoic acid by reintroducing DAG formed from the breakdown of membrane phospholipids into the phosphatidylglycerol biosynthetic pathway. The chain is Diacylglycerol kinase (dagK) from Staphylococcus aureus (strain USA300 / TCH1516).